The chain runs to 119 residues: NADH-quinone oxidoreductase subunit A (119 aa).

3 helical membrane passes run 7-27 (FPVL…VSIG), 63-83 (LVAI…PWGV), and 88-108 (IGWP…LGFA).

It belongs to the complex I subunit 3 family. NDH-1 is composed of 14 different subunits. Subunits NuoA, H, J, K, L, M, N constitute the membrane sector of the complex.

The protein resides in the cell inner membrane. It catalyses the reaction a quinone + NADH + 5 H(+)(in) = a quinol + NAD(+) + 4 H(+)(out). In terms of biological role, NDH-1 shuttles electrons from NADH, via FMN and iron-sulfur (Fe-S) centers, to quinones in the respiratory chain. The immediate electron acceptor for the enzyme in this species is believed to be ubiquinone. Couples the redox reaction to proton translocation (for every two electrons transferred, four hydrogen ions are translocated across the cytoplasmic membrane), and thus conserves the redox energy in a proton gradient. In Paraburkholderia xenovorans (strain LB400), this protein is NADH-quinone oxidoreductase subunit A.